The sequence spans 643 residues: Phosphomethylpyrimidine synthase (643 aa).

Substrate-binding positions include N248, M277, Y306, H342, 362–364 (SRG), 403–406 (DGLR), and E442. H446 lines the Zn(2+) pocket. Y469 is a substrate binding site. Residue H510 participates in Zn(2+) binding. Positions 590, 593, and 598 each coordinate [4Fe-4S] cluster.

It belongs to the ThiC family. As to quaternary structure, homodimer. [4Fe-4S] cluster is required as a cofactor.

The enzyme catalyses 5-amino-1-(5-phospho-beta-D-ribosyl)imidazole + S-adenosyl-L-methionine = 4-amino-2-methyl-5-(phosphooxymethyl)pyrimidine + CO + 5'-deoxyadenosine + formate + L-methionine + 3 H(+). It functions in the pathway cofactor biosynthesis; thiamine diphosphate biosynthesis. In terms of biological role, catalyzes the synthesis of the hydroxymethylpyrimidine phosphate (HMP-P) moiety of thiamine from aminoimidazole ribotide (AIR) in a radical S-adenosyl-L-methionine (SAM)-dependent reaction. The polypeptide is Phosphomethylpyrimidine synthase (Burkholderia cenocepacia (strain ATCC BAA-245 / DSM 16553 / LMG 16656 / NCTC 13227 / J2315 / CF5610) (Burkholderia cepacia (strain J2315))).